The chain runs to 224 residues: Dehydration-responsive element-binding protein 1G (224 aa).

Residues 1 to 16 are compositionally biased toward polar residues; it reads MDVSAALSSDYSSGTP. Residues 1–46 are disordered; that stretch reads MDVSAALSSDYSSGTPSPVAADADDGSSAYMTVSSAPPKRRAGRTK. A DNA-binding region (AP2/ERF) is located at residues 54–111; it reads VFKGVRRRNPGRWVCEVREPHGKQRIWLGTFETAEMAARAHDVAALALRGRAACLNFA. 2 disordered regions span residues 139 to 161 and 200 to 224; these read AFRP…SGAT and PPMA…LWSY.

Belongs to the AP2/ERF transcription factor family. ERF subfamily.

It localises to the nucleus. Transcriptional activator that binds specifically to the DNA sequence 5'-[AG]CCGAC-3'. Binding to the C-repeat/DRE element mediates high salinity- and dehydration-inducible transcription. The protein is Dehydration-responsive element-binding protein 1G (DREB1G) of Oryza sativa subsp. japonica (Rice).